A 118-amino-acid chain; its full sequence is UPF0102 protein lpg2994 (118 aa).

Belongs to the UPF0102 family.

This Legionella pneumophila subsp. pneumophila (strain Philadelphia 1 / ATCC 33152 / DSM 7513) protein is UPF0102 protein lpg2994.